Consider the following 548-residue polypeptide: Probable inorganic phosphate transporter 1-5 (548 aa).

Over 1 to 23 (MVQDRKVLDALDTAKTQWYHFTA) the chain is Cytoplasmic. The chain crosses the membrane as a helical span at residues 24–44 (VVIAGMGFFTDAYDLFSISLV). The Extracellular segment spans residues 45-69 (TKLLGRIYYFNPASKSPGSLPPNVS). A helical membrane pass occupies residues 70–90 (AAVNGVAFCGTLAGQLFFGWL). Over 91–98 (GDKMGRKK) the chain is Cytoplasmic. A helical membrane pass occupies residues 99-119 (VYGMTLMLMVICCLASGLSFG). Residues 120-123 (SSAK) are Extracellular-facing. A helical membrane pass occupies residues 124-144 (GVMATLCFFRFWLGFGIGGDY). The Cytoplasmic portion of the chain corresponds to 145–163 (PLSATIMSEYANKRTRGAF). A helical transmembrane segment spans residues 164–184 (IAAVFAMQGFGNLTGGIVAII). Residues 185 to 210 (VSAAFKLRFDAPAYRDDRAGSTVPQA) are Extracellular-facing. Residues 211–231 (DYAWRIVLMFGAIPALLTYYW) traverse the membrane as a helical segment. The Cytoplasmic segment spans residues 232–303 (RMKMPETARY…REFARRHGHH (72 aa)). The chain crosses the membrane as a helical span at residues 304–324 (LLGTTVCWFVLDIAYYSQNLF). Residues 325–355 (QKDIYTAVQWLPKADTMSALEEMFKISRAQT) are Extracellular-facing. Residues 356 to 376 (LVALCGTIPGYWFTVLFIDIV) traverse the membrane as a helical segment. Over 377–378 (GR) the chain is Cytoplasmic. The chain crosses the membrane as a helical span at residues 379–399 (FAIQLGGFFLMTAFMLGLAVP). The Extracellular segment spans residues 400–405 (YHHWTT). The chain crosses the membrane as a helical span at residues 406 to 426 (PGNHVGFVVMYAFTFFFANFG). At 427–449 (PNSTTFIVPAEIFPARLRSTCHG) the chain is on the cytoplasmic side. The helical transmembrane segment at 450-470 (ISSAAGKMGAIVGSFGFLYAA) threads the bilayer. Residues 471-490 (QSTDPSKTDAGYPRGIGVRN) lie on the Extracellular side of the membrane. A helical transmembrane segment spans residues 491–511 (SLFLLAGCNVVGFLFTFLVPE). Topologically, residues 512-548 (SKGKSLEELSGENEMEAEPAAATNSYRQTVPDSGQSE) are cytoplasmic. The tract at residues 518 to 548 (EELSGENEMEAEPAAATNSYRQTVPDSGQSE) is disordered. Polar residues predominate over residues 533–548 (ATNSYRQTVPDSGQSE).

It belongs to the major facilitator superfamily. Phosphate:H(+) symporter (TC 2.A.1.9) family. Expressed at low levels in roots.

It localises to the membrane. In terms of biological role, high-affinity transporter for external inorganic phosphate. The polypeptide is Probable inorganic phosphate transporter 1-5 (PHT1-5) (Oryza sativa subsp. japonica (Rice)).